A 778-amino-acid chain; its full sequence is Preasperterpenoid A synthase PvPS (778 aa).

The segment at 1 to 414 (MAATKKSTAT…HRYNFHKPAA (414 aa)) is terpene cyclase. Mg(2+)-binding residues include aspartate 176 and aspartate 180. Aspartate 176 serves as a coordination point for substrate. The DDXXD 1 signature appears at 176–180 (DDILD). Residues 266 to 269 (RVIN), asparagine 310, 314 to 318 (SWEKE), and 406 to 407 (RY) contribute to the substrate site. An NSE/DTE motif is present at residues 310 to 318 (NDYFSWEKE). A compositionally biased stretch (basic and acidic residues) spans 414 to 431 (AKENEDTDDEGAKSDDSK). Positions 415 to 778 (KENEDTDDEG…LRLLLKRLQV (364 aa)) are prenyltransferase. Residues 416 to 454 (ENEDTDDEGAKSDDSKTTLNDSTDSTVVDVKTPATSGLL) are disordered. Residues lysine 499, arginine 502, and histidine 531 each coordinate isopentenyl diphosphate. Mg(2+)-binding residues include aspartate 538 and aspartate 542. Residues 538–542 (DDIED) carry the DDXXD 2 motif. Arginine 547 contacts dimethylallyl diphosphate. Residue arginine 548 participates in isopentenyl diphosphate binding. Dimethylallyl diphosphate-binding residues include lysine 625, threonine 626, glutamine 662, asparagine 669, lysine 679, and lysine 689.

In the N-terminal section; belongs to the terpene synthase family. This sequence in the C-terminal section; belongs to the FPP/GGPP synthase family. In terms of assembly, hexamer. Requires Mg(2+) as cofactor.

The enzyme catalyses isopentenyl diphosphate + (2E,6E)-farnesyl diphosphate = (2E,6E,10E)-geranylgeranyl diphosphate + diphosphate. It catalyses the reaction isopentenyl diphosphate + (2E,6E,10E)-geranylgeranyl diphosphate = (2E,6E,10E,14E)-geranylfarnesyl diphosphate + diphosphate. The catalysed reaction is (2E,6E,10E,14E)-geranylfarnesyl diphosphate = preasperterpenoid A + diphosphate. The protein operates within secondary metabolite biosynthesis; terpenoid biosynthesis. In terms of biological role, bifunctional sesterterpene synthase that possesses both prenyl transferase and terpene cyclase activity, converting isopentenyl diphosphate and dimethylallyl diphosphate into geranylfarnesyl diphosphate (GFPP) and further converting GFPP into preasperterpenoid A. The protein is Preasperterpenoid A synthase PvPS of Talaromyces verruculosus (Penicillium verruculosum).